A 288-amino-acid chain; its full sequence is ATP synthase gamma chain (288 aa).

The protein belongs to the ATPase gamma chain family. As to quaternary structure, F-type ATPases have 2 components, CF(1) - the catalytic core - and CF(0) - the membrane proton channel. CF(1) has five subunits: alpha(3), beta(3), gamma(1), delta(1), epsilon(1). CF(0) has three main subunits: a, b and c.

It localises to the cell inner membrane. Functionally, produces ATP from ADP in the presence of a proton gradient across the membrane. The gamma chain is believed to be important in regulating ATPase activity and the flow of protons through the CF(0) complex. The protein is ATP synthase gamma chain of Rickettsia prowazekii (strain Madrid E).